A 139-amino-acid polypeptide reads, in one-letter code: D-ribose pyranase (139 aa).

The active-site Proton donor is H20. Residues D28, H106, and 128 to 130 each bind substrate; that span reads YAN.

Belongs to the RbsD / FucU family. RbsD subfamily. Homodecamer.

It localises to the cytoplasm. The enzyme catalyses beta-D-ribopyranose = beta-D-ribofuranose. It functions in the pathway carbohydrate metabolism; D-ribose degradation; D-ribose 5-phosphate from beta-D-ribopyranose: step 1/2. Functionally, catalyzes the interconversion of beta-pyran and beta-furan forms of D-ribose. The chain is D-ribose pyranase from Aeromonas hydrophila subsp. hydrophila (strain ATCC 7966 / DSM 30187 / BCRC 13018 / CCUG 14551 / JCM 1027 / KCTC 2358 / NCIMB 9240 / NCTC 8049).